Consider the following 248-residue polypeptide: Opiorphin prepropeptide (248 aa).

An N-terminal signal peptide occupies residues 1-21 (MKLTFFLGLLALISCFTPSES). Gln-22 carries the post-translational modification Pyrrolidone carboxylic acid. A disordered region spans residues 150 to 198 (DTTITTNPPTTATATTSTSTKPTMTISSSTVPISSTPEPATSISAATPA). A glycan (N-linked (GlcNAc...) asparagine) is linked at Asn-218.

Belongs to the PROL1/PROL3 family. Abundantly expressed in lacrimal gland where it found in the secretory endpieces. Also expressed at modest levels in the submandibular gland.

The protein localises to the secreted. In terms of biological role, opiorphin is an endogenous inhibitor of neprilysin and aminopeptidase N. Inhibits the breakdown of substance P, Mca-BK2 and Met-enkephalin by neprilysin in vitro with IC(50) values of 29 uM, 33 uM and 33 uM respectively. Inhibits the breakdown of Ala-pNA by aminopeptidase N in vitro with an IC(50) of 65 uM. Has a potent analgesic effect when administered to rats by intravenous injection. The polypeptide is Opiorphin prepropeptide (Homo sapiens (Human)).